A 692-amino-acid polypeptide reads, in one-letter code: Elongation factor G (692 aa).

Residues 9 to 283 (DKLRNIGIMA…AVIDYLPSPL (275 aa)) form the tr-type G domain. Residues 18-25 (AHIDAGKT), 82-86 (DTPGH), and 136-139 (NKMD) contribute to the GTP site.

Belongs to the TRAFAC class translation factor GTPase superfamily. Classic translation factor GTPase family. EF-G/EF-2 subfamily.

The protein resides in the cytoplasm. Catalyzes the GTP-dependent ribosomal translocation step during translation elongation. During this step, the ribosome changes from the pre-translocational (PRE) to the post-translocational (POST) state as the newly formed A-site-bound peptidyl-tRNA and P-site-bound deacylated tRNA move to the P and E sites, respectively. Catalyzes the coordinated movement of the two tRNA molecules, the mRNA and conformational changes in the ribosome. This Thermotoga maritima (strain ATCC 43589 / DSM 3109 / JCM 10099 / NBRC 100826 / MSB8) protein is Elongation factor G (fusA).